Consider the following 255-residue polypeptide: Ribonuclease HII (255 aa).

An RNase H type-2 domain is found at 72–255 (RLIAGVDEVG…KTFAPVQSFR (184 aa)). 3 residues coordinate a divalent metal cation: Asp-78, Glu-79, and Asp-170.

This sequence belongs to the RNase HII family. Mn(2+) serves as cofactor. It depends on Mg(2+) as a cofactor.

The protein localises to the cytoplasm. It catalyses the reaction Endonucleolytic cleavage to 5'-phosphomonoester.. Its function is as follows. Endonuclease that specifically degrades the RNA of RNA-DNA hybrids. This chain is Ribonuclease HII (rnhB), found in Bacillus subtilis (strain 168).